Reading from the N-terminus, the 444-residue chain is Coagulation factor VII (444 aa).

A signal peptide spans M1–A21. Positions A22–R39 are excised as a propeptide. Residues A40–N84 form the Gla domain. 4-carboxyglutamate occurs at positions 45, 46, 53, 55, 58, 59, 64, 65, 68, and 74. An intrachain disulfide couples C56 to C61. The 37-residue stretch at D85–E121 folds into the EGF-like 1; calcium-binding domain. Disulfide bonds link C89–C100, C94–C109, C111–C120, C130–C141, C137–C151, C153–C166, C174–C301, C198–C203, and C217–C233. S91 is a glycosylation site (O-linked (Glc...) serine; alternate). Residue S91 is glycosylated (O-linked (Xyl...) serine; alternate). S99 carries O-linked (Fuc) serine glycosylation. At D102 the chain carries (3R)-3-hydroxyaspartate. In terms of domain architecture, EGF-like 2 spans D126–T167. Positions I192–R431 constitute a Peptidase S1 domain. A glycan (N-linked (GlcNAc...) asparagine) is linked at N211. The active-site Charge relay system is the H232. Residue N242 is glycosylated (N-linked (GlcNAc...) asparagine). The Charge relay system role is filled by D281. Residue N306 is glycosylated (N-linked (GlcNAc...) asparagine). C349 and C368 are disulfide-bonded. Residue D377 participates in substrate binding. A disulfide bridge links C379 with C407. The active-site Charge relay system is the S383.

Belongs to the peptidase S1 family. Heterodimer of a light chain and a heavy chain linked by a disulfide bond. In terms of processing, the vitamin K-dependent, enzymatic carboxylation of some glutamate residues allows the modified protein to bind calcium. Post-translationally, the iron and 2-oxoglutarate dependent 3-hydroxylation of aspartate and asparagine is (R) stereospecific within EGF domains. O-glycosylated. O-fucosylated by POFUT1 on a conserved serine or threonine residue found in the consensus sequence C2-X(4,5)-[S/T]-C3 of EGF domains, where C2 and C3 are the second and third conserved cysteines. In terms of processing, can be either O-glucosylated or O-xylosylated at Ser-91 by POGLUT1. Plasma.

The protein resides in the secreted. The catalysed reaction is Selective cleavage of Arg-|-Ile bond in factor X to form factor Xa.. Initiates the extrinsic pathway of blood coagulation. Serine protease that circulates in the blood in a zymogen form. Factor VII is converted to factor VIIa by factor Xa, factor XIIa, factor IXa, or thrombin by minor proteolysis. In the presence of tissue factor and calcium ions, factor VIIa then converts factor X to factor Xa by limited proteolysis. Factor VIIa also converts factor IX to factor IXa in the presence of tissue factor and calcium. The protein is Coagulation factor VII (F7) of Oryctolagus cuniculus (Rabbit).